A 358-amino-acid chain; its full sequence is Cyanide hydratase (358 aa).

The CN hydrolase domain maps to 8-287 (YKAAAVNAEP…QGLLFVDIDL (280 aa)). The active-site Proton acceptor is glutamate 48. The active site involves lysine 130. Cysteine 165 serves as the catalytic Nucleophile.

Belongs to the carbon-nitrogen hydrolase superfamily. Nitrilase family. As to quaternary structure, oligomer of dimers, forming left-handed helical fibers.

It catalyses the reaction formamide = hydrogen cyanide + H2O. In terms of biological role, catalyzes the hydration of cyanide to formamide. Degradation of cyanide may be important for plant pathogenic fungi in infection of cyanogenic plants. The protein is Cyanide hydratase of Penicillium rubens (strain ATCC 28089 / DSM 1075 / NRRL 1951 / Wisconsin 54-1255) (Penicillium chrysogenum).